Consider the following 313-residue polypeptide: Formimidoylglutamase (313 aa).

6 residues coordinate Mn(2+): His130, Asp155, His157, Asp159, Asp241, and Asp243.

This sequence belongs to the arginase family. Mn(2+) is required as a cofactor.

The enzyme catalyses N-formimidoyl-L-glutamate + H2O = formamide + L-glutamate. It participates in amino-acid degradation; L-histidine degradation into L-glutamate; L-glutamate from N-formimidoyl-L-glutamate (hydrolase route): step 1/1. Its function is as follows. Catalyzes the conversion of N-formimidoyl-L-glutamate to L-glutamate and formamide. This Salmonella paratyphi A (strain ATCC 9150 / SARB42) protein is Formimidoylglutamase.